Reading from the N-terminus, the 975-residue chain is Synaptopodin 2-like protein (975 aa).

The PDZ domain maps to 6–85 (EVQVTLAGGA…QLVLTVRRVT (80 aa)). 3 disordered regions span residues 18 to 41 (GFRLQGGTEQRKPLQIRRRSQAGR), 86 to 214 (DEGS…PAEA), and 314 to 349 (AGTGTEEEDGIPPTSESELDEETFSDARSLTNQSDW). Residues serine 105 and serine 108 each carry the phosphoserine modification. Threonine 138 bears the Phosphothreonine mark. Phosphoserine occurs at positions 140, 163, 175, and 177. Residues 187 to 200 (GSPSQGDSRVSSPS) are compositionally biased toward polar residues. The segment covering 202–214 (EEGAALQPPPAEA) has biased composition (low complexity). The span at 339–349 (DARSLTNQSDW) shows a compositional bias: polar residues. A phosphoserine mark is found at serine 342, serine 347, serine 371, serine 378, and serine 381. Omega-N-methylarginine is present on residues arginine 383, arginine 463, arginine 466, and arginine 476. The disordered stretch occupies residues 491-649 (KVNEGLGSTS…ETKNSPNPEL (159 aa)). Residues 502-516 (APSPFAAPPQGPTPL) show a composition bias toward pro residues. Over residues 519–528 (FTTVVPSHTP) the composition is skewed to polar residues. 2 stretches are compositionally biased toward low complexity: residues 530–540 (SGASSSTQRSS) and 571–580 (SAAAMTSTAS). 2 positions are modified to phosphoserine: serine 667 and serine 675. Positions 687-731 (LGGRSYKTLPQVSPKTPPPMAPKTPPPTTPKTPPPVAPKPGSRGL) are disordered. Pro residues predominate over residues 701–724 (KTPPPMAPKTPPPTTPKTPPPVAP). Phosphothreonine occurs at positions 702 and 710. Residue arginine 754 is modified to Omega-N-methylarginine. Residues 772–797 (EATSGSSLNPGLRPRSPSPTPSLPPS) form a disordered region. Serine 787 and serine 789 each carry phosphoserine. Phosphothreonine is present on threonine 791. 3 positions are modified to omega-N-methylarginine: arginine 805, arginine 825, and arginine 888. Serine 890 carries the phosphoserine modification. Residues threonine 891 and threonine 897 each carry the phosphothreonine modification. Position 909 is an omega-N-methylarginine (arginine 909). Arginine 920 carries the asymmetric dimethylarginine; alternate modification. An Omega-N-methylarginine; alternate modification is found at arginine 920. 2 positions are modified to omega-N-methylarginine: arginine 953 and arginine 955.

Belongs to the synaptopodin family.

The protein localises to the cytoplasm. It localises to the cytoskeleton. In terms of biological role, actin-associated protein that may play a role in modulating actin-based shape. This chain is Synaptopodin 2-like protein (Synpo2l), found in Mus musculus (Mouse).